Reading from the N-terminus, the 381-residue chain is 1-deoxy-D-xylulose 5-phosphate reductoisomerase (381 aa).

The NADPH site is built by G13, S14, I15, N40, and N114. K115 is a 1-deoxy-D-xylulose 5-phosphate binding site. E116 is a binding site for NADPH. D140 contributes to the Mn(2+) binding site. 1-deoxy-D-xylulose 5-phosphate is bound by residues S141, E142, S166, and H189. A Mn(2+)-binding site is contributed by E142. G195 lines the NADPH pocket. The 1-deoxy-D-xylulose 5-phosphate site is built by S202, N207, K208, and E211. E211 serves as a coordination point for Mn(2+).

This sequence belongs to the DXR family. It depends on Mg(2+) as a cofactor. The cofactor is Mn(2+).

The catalysed reaction is 2-C-methyl-D-erythritol 4-phosphate + NADP(+) = 1-deoxy-D-xylulose 5-phosphate + NADPH + H(+). The protein operates within isoprenoid biosynthesis; isopentenyl diphosphate biosynthesis via DXP pathway; isopentenyl diphosphate from 1-deoxy-D-xylulose 5-phosphate: step 1/6. In terms of biological role, catalyzes the NADPH-dependent rearrangement and reduction of 1-deoxy-D-xylulose-5-phosphate (DXP) to 2-C-methyl-D-erythritol 4-phosphate (MEP). This Treponema denticola (strain ATCC 35405 / DSM 14222 / CIP 103919 / JCM 8153 / KCTC 15104) protein is 1-deoxy-D-xylulose 5-phosphate reductoisomerase.